The chain runs to 614 residues: Zinc metalloproteinase-disintegrin-like VLAIP-B (614 aa).

The signal sequence occupies residues 1–20 (MMQVLLVTICLAVFPYQGSS). Positions 21–193 (IILESGNVND…KASQLNLTPE (173 aa)) are excised as a propeptide. Position 194 is a pyrrolidone carboxylic acid (Gln194). The Peptidase M12B domain occupies 202-398 (KYVELVIVAD…KMPQCILNKP (197 aa)). Glu205 provides a ligand contact to Ca(2+). Residue Asn262 is glycosylated (N-linked (GlcNAc...) asparagine). Ca(2+) is bound at residue Asp289. 3 disulfides stabilise this stretch: Cys313/Cys393, Cys353/Cys377, and Cys355/Cys360. His338 lines the Zn(2+) pocket. Glu339 is a catalytic residue. His342 and His348 together coordinate Zn(2+). The Ca(2+) site is built by Cys393, Asn396, Val408, Asn411, Phe413, Glu415, Glu418, and Asp421. The Disintegrin domain occupies 406–492 (PAVCGNYFVE…ECPTDQFQRN (87 aa)). 14 disulfides stabilise this stretch: Cys409-Cys438, Cys420-Cys433, Cys422-Cys428, Cys432-Cys455, Cys446-Cys452, Cys451-Cys477, Cys464-Cys484, Cys471-Cys503, Cys496-Cys508, Cys515-Cys565, Cys530-Cys576, Cys543-Cys553, Cys560-Cys602, and Cys596-Cys607. A D/ECD-tripeptide motif is present at residues 470-472 (ECD). Residues Asn505, Asn547, and Asn568 are each glycosylated (N-linked (GlcNAc...) asparagine).

It belongs to the venom metalloproteinase (M12B) family. P-III subfamily. P-IIIc sub-subfamily. As to quaternary structure, heterodimer; disulfide-linked. Zn(2+) serves as cofactor. Post-translationally, the N-terminus is blocked. Expressed by the venom gland.

Its subcellular location is the secreted. With respect to regulation, inhibited by EDTA or 1,10-phenanthroline. Not inhibited by PMSF. Functionally, this metalloproteinase hydrolyzes azocasein, and insulin B-chain (at the '38-Ala-|-Leu-39' bond). Also hydrolyzes the Aalpha-chain (FGA) and more slowly the Bbeta-chain of fibrinogen (FGB), without affecting the gamma-chain. Cleaves alpha-chain of fibrinogen at '432-Lys-|-Leu-433' and '535-Pro-|-Met-536' bonds. Does not cleave fibrin. Inhibits endothelial cell adhesion to extracellular matrix proteins such as fibrinogen, fibronectin, vitronectin, collagen I, and collagen IV. Induces apoptosis in vascular endothelial cells. This chain is Zinc metalloproteinase-disintegrin-like VLAIP-B, found in Macrovipera lebetinus (Levantine viper).